The chain runs to 736 residues: uncharacterized protein (736 aa).

2 ABC transporter domains span residues 183–459 (IKID…KQME) and 518–734 (LQMS…TMTI). Residues 215 to 222 (GRNGIGKS) and 551 to 558 (GPNGAGKS) contribute to the ATP site.

It belongs to the ABC transporter superfamily.

It is found in the cytoplasm. This is an uncharacterized protein from Schizosaccharomyces pombe (strain 972 / ATCC 24843) (Fission yeast).